A 150-amino-acid chain; its full sequence is Deoxyuridine 5'-triphosphate nucleotidohydrolase (150 aa).

Substrate contacts are provided by residues 69 to 71, Asn-82, 86 to 88, and Lys-96; these read RSG and LID.

This sequence belongs to the dUTPase family. Mg(2+) is required as a cofactor.

It catalyses the reaction dUTP + H2O = dUMP + diphosphate + H(+). It functions in the pathway pyrimidine metabolism; dUMP biosynthesis; dUMP from dCTP (dUTP route): step 2/2. Its function is as follows. This enzyme is involved in nucleotide metabolism: it produces dUMP, the immediate precursor of thymidine nucleotides and it decreases the intracellular concentration of dUTP so that uracil cannot be incorporated into DNA. This is Deoxyuridine 5'-triphosphate nucleotidohydrolase from Neisseria gonorrhoeae (strain NCCP11945).